A 74-amino-acid chain; its full sequence is Acyclotide phyb-K (74 aa).

Residues 1 to 24 (MARVNSLKCALCFIVLILFVQLNC) form the signal peptide. Positions 25–43 (IPETRVMAVELSRVFLQTS) are excised as a propeptide. Intrachain disulfides connect Cys47-Cys64, Cys51-Cys66, and Cys56-Cys71.

In terms of processing, contains 3 disulfide bonds. Expressed in midvein, lamina and periphery of leaves (at protein level).

Probably participates in a plant defense mechanism. This Petunia hybrida (Petunia) protein is Acyclotide phyb-K.